Consider the following 152-residue polypeptide: Small ribosomal subunit protein uS15 (152 aa).

A compositionally biased stretch (basic residues) spans 1–11 (MAKMHTKRKGK). The disordered stretch occupies residues 1 to 23 (MAKMHTKRKGKSSSTRPIRTDPP).

Belongs to the universal ribosomal protein uS15 family. Part of the 30S ribosomal subunit.

In Methanosarcina acetivorans (strain ATCC 35395 / DSM 2834 / JCM 12185 / C2A), this protein is Small ribosomal subunit protein uS15.